Reading from the N-terminus, the 171-residue chain is Homeobox protein engrailed-1-B (171 aa).

Disordered regions lie at residues 1–41 and 60–86; these read EDPG…NAAP and YSDR…KRPR. A compositionally biased stretch (low complexity) spans 15 to 29; that stretch reads PDSDTPSDSSKGSDS. Residues 82 to 141 constitute a DNA-binding region (homeobox); it reads DKRPRTAFTAEQLQRLKAEFQANRYITEQRRQTLAQELSLNESQIKIWFQNKRAKIKKAS.

The protein belongs to the engrailed homeobox family.

The protein resides in the nucleus. Its function is as follows. Required for proper formation of the apical ectodermal ridge and correct dorsal-ventral patterning in the limb. In Xenopus laevis (African clawed frog), this protein is Homeobox protein engrailed-1-B (en1-b).